The following is a 156-amino-acid chain: Endogenous retrovirus group K member 7 Pro protein (156 aa).

The region spanning 21-96 is the Peptidase A2 domain; the sequence is FEGLVDTGAD…IPLNLWGRDL (76 aa). Asp26 is a catalytic residue. Positions 111–156 constitute a G-patch domain; it reads YSPTSQKIMTKMGYIPGKGLGKNEDGIKVPVEAKINQEREGIGYPF.

It belongs to the peptidase A2 family. HERV class-II K(HML-2) subfamily. Active as a homodimer. Post-translationally, autoproteolytically processed at the N-terminus. Expected C-terminal autoprocessing not detected. The sequence shown is that of the processed Pro protein.

It catalyses the reaction Processing at the authentic HIV-1 PR recognition site and release of the mature p17 matrix and the p24 capsid protein, as a result of the cleavage of the -SQNY-|-PIVQ- cleavage site.. Its function is as follows. Retroviral proteases have roles in processing of the primary translation products and the maturation of the viral particle. Endogenous Pro proteins may have kept, lost or modified their original function during evolution. This endogenous protein has retained most of the characteristics of retroviral proteases. This chain is Endogenous retrovirus group K member 7 Pro protein (ERVK-7), found in Homo sapiens (Human).